An 84-amino-acid chain; its full sequence is Large ribosomal subunit protein bL27 (84 aa).

A disordered region spans residues Met1 to Gly22. Positions Ala7–Gln19 are enriched in polar residues.

It belongs to the bacterial ribosomal protein bL27 family.

The polypeptide is Large ribosomal subunit protein bL27 (Streptomyces avermitilis (strain ATCC 31267 / DSM 46492 / JCM 5070 / NBRC 14893 / NCIMB 12804 / NRRL 8165 / MA-4680)).